The sequence spans 349 residues: Protein-glutamate methylesterase/protein-glutamine glutaminase (349 aa).

The 118-residue stretch at 5–122 folds into the Response regulatory domain; sequence RVLCVDDSAL…REGMLAYSEL (118 aa). At D56 the chain carries 4-aspartylphosphate. Residues 152 to 344 form the CheB-type methylesterase domain; that stretch reads LLSSEKLIAI…QRMLAQISSG (193 aa). Catalysis depends on residues S164, H190, and D286.

Belongs to the CheB family. Phosphorylated by CheA. Phosphorylation of the N-terminal regulatory domain activates the methylesterase activity.

Its subcellular location is the cytoplasm. It catalyses the reaction [protein]-L-glutamate 5-O-methyl ester + H2O = L-glutamyl-[protein] + methanol + H(+). It carries out the reaction L-glutaminyl-[protein] + H2O = L-glutamyl-[protein] + NH4(+). Functionally, involved in chemotaxis. Part of a chemotaxis signal transduction system that modulates chemotaxis in response to various stimuli. Catalyzes the demethylation of specific methylglutamate residues introduced into the chemoreceptors (methyl-accepting chemotaxis proteins or MCP) by CheR. Also mediates the irreversible deamidation of specific glutamine residues to glutamic acid. The chain is Protein-glutamate methylesterase/protein-glutamine glutaminase from Yersinia pseudotuberculosis serotype I (strain IP32953).